Reading from the N-terminus, the 158-residue chain is uncharacterized protein (158 aa).

Transmembrane regions (helical) follow at residues 66-86 and 94-114; these read LLII…PWIM and FFSL…SLTI.

It is found in the membrane. This is an uncharacterized protein from Saccharomyces cerevisiae (strain ATCC 204508 / S288c) (Baker's yeast).